The chain runs to 145 residues: Large ribosomal subunit protein uL11 (145 aa).

This sequence belongs to the universal ribosomal protein uL11 family. In terms of assembly, part of the ribosomal stalk of the 50S ribosomal subunit. Interacts with L10 and the large rRNA to form the base of the stalk. L10 forms an elongated spine to which L12 dimers bind in a sequential fashion forming a multimeric L10(L12)X complex. In terms of processing, one or more lysine residues are methylated.

Its function is as follows. Forms part of the ribosomal stalk which helps the ribosome interact with GTP-bound translation factors. This chain is Large ribosomal subunit protein uL11, found in Rickettsia canadensis (strain McKiel).